The sequence spans 307 residues: Putative lipid kinase SE_0507 (307 aa).

The DAGKc domain occupies 3–139; the sequence is QPYNHGVLFY…YDVLKVNDLY (137 aa). ATP is bound by residues Ser44, 74 to 80, and Thr101; that span reads GDGTLNE. The Mg(2+) site is built by Ser220, Asp223, and Arg225. Glu281 serves as the catalytic Proton acceptor.

The protein belongs to the diacylglycerol/lipid kinase family. The cofactor is Mg(2+).

In terms of biological role, may catalyze the ATP-dependent phosphorylation of lipids other than diacylglycerol (DAG). In Staphylococcus epidermidis (strain ATCC 12228 / FDA PCI 1200), this protein is Putative lipid kinase SE_0507.